We begin with the raw amino-acid sequence, 453 residues long: MLKQILADMYIDPELLAELSEEQKQILFFKMRQEQIRRWQEWEAKCDQNEDKKRNSRPRKACNKSVHWRFGTDQEVWVWVMGEHSSDKPYDQICDEIIAEQARREAEKEAEQLRKKQEVELSQLSTLRLHPHNNADLLKKNTDTKQMVNENVRIANQQIINDENQSIIEKPRTVEDILSAATSKNKYEVKQKKENILKEKENDRLQERTQEIYMNWKEAQEVKQKLEKEDKEWQESLRKSKLADERRRSVAKQARDDYKRLSMQGINRGKVADTAKTFGAVKRPPIPPKPKLPPSANNSSINRMDRRQGIRRLNSAINRENIIKWFKEEQLPLKAGWDKSGSYVEPWFHGIISRQESEQLLGSHGHGSFLLRVSEKIQGYVLSYCSEEGCAHFLIDASATSYSFLGVDQLQHTTLADLVEYHKTEPIPSLGRELLRFPCGQKKGVCDYSDLLE.

Residues 96–127 adopt a coiled-coil conformation; sequence EIIAEQARREAEKEAEQLRKKQEVELSQLSTL. The interval 280 to 301 is disordered; it reads AVKRPPIPPKPKLPPSANNSSI. Residues 284 to 293 are compositionally biased toward pro residues; sequence PPIPPKPKLP. In terms of domain architecture, SH2 spans 347 to 439; sequence WFHGIISRQE…LGRELLRFPC (93 aa).

The protein resides in the cytoplasm. Its function is as follows. Inhibits estrogen-induced cell proliferation. This chain is SH2 domain-containing protein 4A (sh2d4a), found in Xenopus tropicalis (Western clawed frog).